The primary structure comprises 456 residues: Bifunctional protein GlmU (456 aa).

The interval 1 to 228 is pyrophosphorylase; the sequence is MPQNTLNTVI…SHLAAGVNNK (228 aa). UDP-N-acetyl-alpha-D-glucosamine is bound by residues 11-14, lysine 25, glutamine 75, 80-81, 102-104, glycine 138, glutamate 153, asparagine 168, and asparagine 226; these read LAAG, GT, and YGD. Aspartate 104 contacts Mg(2+). Asparagine 226 lines the Mg(2+) pocket. Residues 229-249 form a linker region; it reads RQLAELERIFQTEQAQELLKA. An N-acetyltransferase region spans residues 250–456; that stretch reads GVTLRDPARF…GWMRPEKDKQ (207 aa). The UDP-N-acetyl-alpha-D-glucosamine site is built by arginine 332 and lysine 350. Residue histidine 362 is the Proton acceptor of the active site. UDP-N-acetyl-alpha-D-glucosamine-binding residues include tyrosine 365 and asparagine 376. Residues alanine 379, 385-386, serine 404, alanine 422, and arginine 439 each bind acetyl-CoA; that span reads NY.

The protein in the N-terminal section; belongs to the N-acetylglucosamine-1-phosphate uridyltransferase family. It in the C-terminal section; belongs to the transferase hexapeptide repeat family. As to quaternary structure, homotrimer. It depends on Mg(2+) as a cofactor.

Its subcellular location is the cytoplasm. It carries out the reaction alpha-D-glucosamine 1-phosphate + acetyl-CoA = N-acetyl-alpha-D-glucosamine 1-phosphate + CoA + H(+). The catalysed reaction is N-acetyl-alpha-D-glucosamine 1-phosphate + UTP + H(+) = UDP-N-acetyl-alpha-D-glucosamine + diphosphate. It participates in nucleotide-sugar biosynthesis; UDP-N-acetyl-alpha-D-glucosamine biosynthesis; N-acetyl-alpha-D-glucosamine 1-phosphate from alpha-D-glucosamine 6-phosphate (route II): step 2/2. The protein operates within nucleotide-sugar biosynthesis; UDP-N-acetyl-alpha-D-glucosamine biosynthesis; UDP-N-acetyl-alpha-D-glucosamine from N-acetyl-alpha-D-glucosamine 1-phosphate: step 1/1. It functions in the pathway bacterial outer membrane biogenesis; LPS lipid A biosynthesis. Functionally, catalyzes the last two sequential reactions in the de novo biosynthetic pathway for UDP-N-acetylglucosamine (UDP-GlcNAc). The C-terminal domain catalyzes the transfer of acetyl group from acetyl coenzyme A to glucosamine-1-phosphate (GlcN-1-P) to produce N-acetylglucosamine-1-phosphate (GlcNAc-1-P), which is converted into UDP-GlcNAc by the transfer of uridine 5-monophosphate (from uridine 5-triphosphate), a reaction catalyzed by the N-terminal domain. The polypeptide is Bifunctional protein GlmU (Neisseria gonorrhoeae (strain ATCC 700825 / FA 1090)).